The sequence spans 61 residues: Small ribosomal subunit protein uS14 (61 aa).

Residues C24, C27, C40, and C43 each coordinate Zn(2+).

The protein belongs to the universal ribosomal protein uS14 family. Zinc-binding uS14 subfamily. In terms of assembly, part of the 30S ribosomal subunit. Contacts proteins S3 and S10. Zn(2+) serves as cofactor.

In terms of biological role, binds 16S rRNA, required for the assembly of 30S particles and may also be responsible for determining the conformation of the 16S rRNA at the A site. The sequence is that of Small ribosomal subunit protein uS14 from Anaeromyxobacter sp. (strain Fw109-5).